We begin with the raw amino-acid sequence, 347 residues long: Very-long-chain 3-oxoacyl-CoA reductase (347 aa).

A helical transmembrane segment spans residues 20 to 40 (LLWVVFGLGVLKCTTLSLRFL). Positions 66, 120, 147, 223, 227, 256, and 258 each coordinate NADP(+). Catalysis depends on tyrosine 223, which acts as the Proton donor. The active-site Lowers pKa of active site Tyr is lysine 227.

The protein belongs to the short-chain dehydrogenases/reductases (SDR) family. As to quaternary structure, interacts with the fatty acid elongation system components ELO3 and TSC13.

It localises to the endoplasmic reticulum membrane. It carries out the reaction a very-long-chain (3R)-3-hydroxyacyl-CoA + NADP(+) = a very-long-chain 3-oxoacyl-CoA + NADPH + H(+). The protein operates within lipid metabolism; fatty acid biosynthesis. Functionally, component of the microsomal membrane bound fatty acid elongation system, which produces the 26-carbon very long-chain fatty acids (VLCFA) from palmitate. Catalyzes the reduction of the 3-ketoacyl-CoA intermediate that is formed in each cycle of fatty acid elongation. VLCFAs serve as precursors for ceramide and sphingolipids. The sequence is that of Very-long-chain 3-oxoacyl-CoA reductase from Saccharomyces cerevisiae (strain RM11-1a) (Baker's yeast).